The following is a 1407-amino-acid chain: DNA-directed RNA polymerase subunit beta' (1407 aa).

Zn(2+) contacts are provided by Cys-70, Cys-72, Cys-85, and Cys-88. 3 residues coordinate Mg(2+): Asp-460, Asp-462, and Asp-464. Zn(2+) contacts are provided by Cys-814, Cys-888, Cys-895, and Cys-898.

Belongs to the RNA polymerase beta' chain family. As to quaternary structure, the RNAP catalytic core consists of 2 alpha, 1 beta, 1 beta' and 1 omega subunit. When a sigma factor is associated with the core the holoenzyme is formed, which can initiate transcription. Mg(2+) is required as a cofactor. Requires Zn(2+) as cofactor.

It catalyses the reaction RNA(n) + a ribonucleoside 5'-triphosphate = RNA(n+1) + diphosphate. DNA-dependent RNA polymerase catalyzes the transcription of DNA into RNA using the four ribonucleoside triphosphates as substrates. The chain is DNA-directed RNA polymerase subunit beta' from Salmonella arizonae (strain ATCC BAA-731 / CDC346-86 / RSK2980).